The following is a 1039-amino-acid chain: uncharacterized protein (1039 aa).

The N-terminal stretch at 1-28 (MKLFPRTLLKILVVSFILNFGVTSKSYA) is a signal peptide. A run of 6 helical transmembrane segments spans residues 326–346 (IVTA…LLAG), 354–374 (YINF…LNIT), 387–407 (MIQW…SWVM), 491–511 (MLVS…AFMV), 517–537 (CMVS…MFLF), and 551–571 (MISF…MFSV). The interval 654 to 680 (KPNQTCDPKAADADTKCNPKPGDSSTS) is disordered. A helical transmembrane segment spans residues 710–730 (IKDILLALVTACFTLYLMYNF). 3 disordered regions span residues 799-875 (LVKG…PTTV), 917-949 (IKEA…LDEN), and 1004-1039 (LYRS…DENP). Residues 802–811 (GSGGGGGSEG) are compositionally biased toward gly residues. Residues 812–836 (GDSFTSGGLRETSSTAATPSSALSS) show a composition bias toward low complexity. The segment covering 843 to 861 (GTATPSSASEEMLDTSFSN) has biased composition (polar residues). Composition is skewed to basic and acidic residues over residues 917–939 (IKEA…HTTE) and 1004–1033 (LYRS…KIDS).

Belongs to the TrbL/VirB6 family.

Its subcellular location is the cell membrane. This is an uncharacterized protein from Rickettsia bellii (strain RML369-C).